Here is a 348-residue protein sequence, read N- to C-terminus: Phosphoribosylformylglycinamidine cyclo-ligase (348 aa).

This sequence belongs to the AIR synthase family.

It is found in the cytoplasm. The catalysed reaction is 2-formamido-N(1)-(5-O-phospho-beta-D-ribosyl)acetamidine + ATP = 5-amino-1-(5-phospho-beta-D-ribosyl)imidazole + ADP + phosphate + H(+). The protein operates within purine metabolism; IMP biosynthesis via de novo pathway; 5-amino-1-(5-phospho-D-ribosyl)imidazole from N(2)-formyl-N(1)-(5-phospho-D-ribosyl)glycinamide: step 2/2. This Cereibacter sphaeroides (strain ATCC 17029 / ATH 2.4.9) (Rhodobacter sphaeroides) protein is Phosphoribosylformylglycinamidine cyclo-ligase.